Consider the following 469-residue polypeptide: Neuraminidase (469 aa).

Topologically, residues 1–9 (MNPNQKIIT) are intravirion. Residues 10 to 30 (IGSVSLTIATICFLMQIAILV) form a helical membrane-spanning segment. Positions 11-33 (GSVSLTIATICFLMQIAILVTTV) are involved in apical transport and lipid raft association. Residues 31–469 (TTVTLHFKQY…DGADINIMPI (439 aa)) lie on the Virion surface side of the membrane. Residues 36 to 88 (HFKQYECDYPANNQAMPCEPIIIERNITEIVYLTNTTIEKEVCPKLVEYRNWS) form a hypervariable stalk region region. N-linked (GlcNAc...) asparagine; by host glycans are attached at residues asparagine 61, asparagine 70, and asparagine 86. The interval 91–469 (QCKITGFAPF…DGADINIMPI (379 aa)) is head of neuraminidase. 8 disulfides stabilise this stretch: cysteine 92/cysteine 417, cysteine 124/cysteine 129, cysteine 183/cysteine 230, cysteine 232/cysteine 237, cysteine 278/cysteine 291, cysteine 280/cysteine 289, cysteine 318/cysteine 337, and cysteine 421/cysteine 447. Substrate is bound at residue arginine 118. Residue asparagine 146 is glycosylated (N-linked (GlcNAc...) asparagine; by host). Aspartate 151 serves as the catalytic Proton donor/acceptor. Residue arginine 152 participates in substrate binding. Residues asparagine 200 and asparagine 234 are each glycosylated (N-linked (GlcNAc...) asparagine; by host). 276 to 277 (EE) contacts substrate. Arginine 292 serves as a coordination point for substrate. Positions 293 and 297 each coordinate Ca(2+). N-linked (GlcNAc...) asparagine; by host glycosylation is present at asparagine 313. A Ca(2+)-binding site is contributed by aspartate 324. Residue arginine 371 participates in substrate binding. An N-linked (GlcNAc...) asparagine; by host glycan is attached at asparagine 402. The active-site Nucleophile is the tyrosine 406.

It belongs to the glycosyl hydrolase 34 family. As to quaternary structure, homotetramer. Ca(2+) serves as cofactor. In terms of processing, N-glycosylated.

The protein resides in the virion membrane. It is found in the host apical cell membrane. It carries out the reaction Hydrolysis of alpha-(2-&gt;3)-, alpha-(2-&gt;6)-, alpha-(2-&gt;8)- glycosidic linkages of terminal sialic acid residues in oligosaccharides, glycoproteins, glycolipids, colominic acid and synthetic substrates.. Inhibited by the neuraminidase inhibitors zanamivir (Relenza) and oseltamivir (Tamiflu). These drugs interfere with the release of progeny virus from infected cells and are effective against all influenza strains. Resistance to neuraminidase inhibitors is quite rare. Functionally, catalyzes the removal of terminal sialic acid residues from viral and cellular glycoconjugates. Cleaves off the terminal sialic acids on the glycosylated HA during virus budding to facilitate virus release. Additionally helps virus spread through the circulation by further removing sialic acids from the cell surface. These cleavages prevent self-aggregation and ensure the efficient spread of the progeny virus from cell to cell. Otherwise, infection would be limited to one round of replication. Described as a receptor-destroying enzyme because it cleaves a terminal sialic acid from the cellular receptors. May facilitate viral invasion of the upper airways by cleaving the sialic acid moieties on the mucin of the airway epithelial cells. Likely to plays a role in the budding process through its association with lipid rafts during intracellular transport. May additionally display a raft-association independent effect on budding. Plays a role in the determination of host range restriction on replication and virulence. Sialidase activity in late endosome/lysosome traffic seems to enhance virus replication. The chain is Neuraminidase from Aves (whales).